Here is a 130-residue protein sequence, read N- to C-terminus: Small ribosomal subunit protein uS9 (130 aa).

The interval 107-130 (DSREVERKKVGLRKARRRPQFSKR) is disordered. Over residues 116–130 (VGLRKARRRPQFSKR) the composition is skewed to basic residues.

It belongs to the universal ribosomal protein uS9 family.

The sequence is that of Small ribosomal subunit protein uS9 from Marinomonas sp. (strain MWYL1).